We begin with the raw amino-acid sequence, 523 residues long: Asparagine--tRNA ligase (523 aa).

Positions 329–350 (SARGDTPLAARSTARTPPVRTP) are disordered.

This sequence belongs to the class-II aminoacyl-tRNA synthetase family. Homodimer.

It is found in the cytoplasm. It catalyses the reaction tRNA(Asn) + L-asparagine + ATP = L-asparaginyl-tRNA(Asn) + AMP + diphosphate + H(+). This is Asparagine--tRNA ligase from Treponema pallidum (strain Nichols).